An 878-amino-acid chain; its full sequence is Alanine--tRNA ligase (878 aa).

Zn(2+) contacts are provided by H567, H571, C668, and H672.

This sequence belongs to the class-II aminoacyl-tRNA synthetase family. Requires Zn(2+) as cofactor.

The protein localises to the cytoplasm. It catalyses the reaction tRNA(Ala) + L-alanine + ATP = L-alanyl-tRNA(Ala) + AMP + diphosphate. Catalyzes the attachment of alanine to tRNA(Ala) in a two-step reaction: alanine is first activated by ATP to form Ala-AMP and then transferred to the acceptor end of tRNA(Ala). Also edits incorrectly charged Ser-tRNA(Ala) and Gly-tRNA(Ala) via its editing domain. The protein is Alanine--tRNA ligase of Magnetococcus marinus (strain ATCC BAA-1437 / JCM 17883 / MC-1).